Consider the following 510-residue polypeptide: Light-independent protochlorophyllide reductase subunit B (510 aa).

Asp36 lines the [4Fe-4S] cluster pocket. Asp296 (proton donor) is an active-site residue. Residue 431 to 432 coordinates substrate; sequence GM.

It belongs to the ChlB/BchB/BchZ family. As to quaternary structure, protochlorophyllide reductase is composed of three subunits; ChlL, ChlN and ChlB. Forms a heterotetramer of two ChlB and two ChlN subunits. It depends on [4Fe-4S] cluster as a cofactor.

It is found in the plastid. It localises to the chloroplast. It carries out the reaction chlorophyllide a + oxidized 2[4Fe-4S]-[ferredoxin] + 2 ADP + 2 phosphate = protochlorophyllide a + reduced 2[4Fe-4S]-[ferredoxin] + 2 ATP + 2 H2O. The protein operates within porphyrin-containing compound metabolism; chlorophyll biosynthesis (light-independent). Functionally, component of the dark-operative protochlorophyllide reductase (DPOR) that uses Mg-ATP and reduced ferredoxin to reduce ring D of protochlorophyllide (Pchlide) to form chlorophyllide a (Chlide). This reaction is light-independent. The NB-protein (ChlN-ChlB) is the catalytic component of the complex. The chain is Light-independent protochlorophyllide reductase subunit B from Stigeoclonium helveticum (Green alga).